The following is a 589-amino-acid chain: Complement component C8 beta chain (589 aa).

Residues 1–31 (MKIGAQVWRALAKSCLLCATLGCLHFPGSRG) form the signal peptide. Residues 32–53 (GKPDFFETKAVNGSLVKSRPVR) constitute a propeptide that is removed on maturation. N-linked (GlcNAc...) asparagine glycosylation occurs at Asn-43. The 54-residue stretch at 63 to 116 (DCELSTWSSWTACDPCQKKRYRHTYLLRPSQFYGELCDLSDKEVEDCVTNQPCR) folds into the TSP type-1 1 domain. 7 disulfides stabilise this stretch: Cys-64–Cys-99, Cys-75–Cys-109, Cys-78–Cys-115, Cys-121–Cys-132, Cys-126–Cys-145, Cys-139–Cys-154, and Cys-161–Cys-199. C-linked (Man) tryptophan glycosylation is found at Trp-69 and Trp-72. The LDL-receptor class A domain maps to 120-155 (RCEGFVCAQTGRCVNRRLLCNGDNDCGDQSDEANCR). The Ca(2+) site is built by Leu-137, Asn-140, Asp-142, Asp-144, Asp-150, and Glu-151. Residues 157–503 (IYKNCQREME…EFQSEVSSCR (347 aa)) form the MACPF domain. A run of 8 beta stranded transmembrane segments spans residues 201-206 (PHYILD), 209-213 (FRKPY), 251-258 (FNFTSGFK), 261-268 (GVMDLGIK), 328-335 (SYGEYRDL), 338-343 (DFGTHF), 378-385 (AGGSFGIG), and 391-398 (VYVKVGVS). A disulfide bridge links Cys-377 with Cys-402. Residues 404-534 (DIMKEINERN…PGGFQGTACE (131 aa)) enclose the EGF-like domain. Thr-417 carries the post-translational modification Phosphothreonine. Disulfide bonds link Cys-502-Cys-549, Cys-504-Cys-520, Cys-507-Cys-522, and Cys-524-Cys-533. Residues 544-587 (DGKWSCWSDWSACSGGHKTRHRQCNNPAPHKGGSPCSGPASETL) form the TSP type-1 2 domain. 2 C-linked (Man) tryptophan glycosylation sites follow: Trp-550 and Trp-553. Residues Cys-556 and Cys-589 are joined by a disulfide bond. The tract at residues 570 to 589 (PAPHKGGSPCSGPASETLNC) is disordered.

Belongs to the complement C6/C7/C8/C9 family. As to quaternary structure, heterotrimer of 3 chains: alpha (C8A), beta (C8B) and gamma (C8G); the alpha and gamma chains are disulfide bonded. Component of the membrane attack complex (MAC), composed of complement C5b, C6, C7, C8A, C8B, C8G and multiple copies of the pore-forming subunit C9. Post-translationally, N-glycosylated; contains one or two bound glycans. Not O-glycosylated.

The protein localises to the secreted. It is found in the target cell membrane. Membrane attack complex (MAC) assembly is inhibited by CD59, thereby protecting self-cells from damage during complement activation. CD59 acts by binding to the beta-haipins of C8 (C8A and C8B), forming an intermolecular beta-sheet that prevents incorporation of the multiple copies of C9 required for complete formation of the osmolytic pore. MAC assembly is also inhibited by clusterin (CLU) chaperones that inhibit polymerization of C9. Functionally, component of the membrane attack complex (MAC), a multiprotein complex activated by the complement cascade, which inserts into a target cell membrane and forms a pore, leading to target cell membrane rupture and cell lysis. The MAC is initiated by proteolytic cleavage of C5 into complement C5b in response to the classical, alternative, lectin and GZMK complement pathways. The complement pathways consist in a cascade of proteins that leads to phagocytosis and breakdown of pathogens and signaling that strengthens the adaptive immune system. C8B, together with C8A and C8G, inserts into the target membrane, but does not form pores by itself. During MAC assembly, associates with C5b, C6 and C7 to form the C5b8 intermediate complex that inserts into the target membrane and traverses the bilayer increasing membrane rigidity. The polypeptide is Complement component C8 beta chain (C8b) (Mus musculus (Mouse)).